Here is a 932-residue protein sequence, read N- to C-terminus: MGLTPMMKQYLEVKESCKDCILFFRLGDFYEMFFEDAKVASKELELVLTGRDCGLEERAPMCGIPYHAANTYIGRLVSAGYKIAICEQLEDPSASKGIVKRGIIKIITPGTYTDSSFLEENKNNYIMSLYLDDNMCAMSFADISTGEFNSTHSNFKEAVVLDEISKFAPREIVLEENIKESFIHTIKERFPNISISKIKEENFAYNIDNNLKEQFNNFNENEYETIVKKSANGLLYYIFHTQKNILSNINKIDYYSIVDYLTIDVNSRRNLEITENLREKTKKGSLLWVLDKTNTAMGGRQLRRWIEQPLINKNPIENRLNAVEELLNNISLQEDLKEDLKSIYDIERIVGKVASKSVNAKELISLKCSIGKVPYIKKYLSSFKSDLFLNMEKCIDTLEDIHKLLDKALLDNPSLSVKEGNIIKEGFNEEVDSLREAKSNGKKWIASLEQKEKEETGIKSLKVSYNKVFGYFIEITKANLNLVPEGRYIRKQTLSNAERYITPELKEMEEKILGAEEKLIDIEYKLFTKIRDFIEENIDRMQKTARIISDIDCLCSLATVALENNYIKPNINAKDEILIEEGRHPVVEKVIPKGEFISNDSLIDTKENQLILITGPNMAGKSTYMRQVALITIMAQIGSFVPAKKANISICDKIFTRIGASDDLAAGKSTFMVEMWEVSNILKNATSKSLVLLDEVGRGTSTYDGLSIAWSVIEYICNNKNLRCKTLFATHYHELTKLEDNIEGVKNYSVSVSELENEIVFLRKIIRGGADQSYGIEVAKLAGLPSPVINRAKEILQHIEGDKEENSLNITPSKEYKSKDYIEVSKDTLNTKNNLESEIKHDTLSETNTATIIEDESTKEHLSSNKKQINCKRNGEKSIKKEVAVDSFQINFEHIKKDKIIEEIKNIDILNMTPMEGFNKLYDIINKTKDID.

615–622 (GPNMAGKS) provides a ligand contact to ATP.

It belongs to the DNA mismatch repair MutS family.

This protein is involved in the repair of mismatches in DNA. It is possible that it carries out the mismatch recognition step. This protein has a weak ATPase activity. The chain is DNA mismatch repair protein MutS from Clostridium botulinum (strain 657 / Type Ba4).